The sequence spans 113 residues: U11-theraphotoxin-Hhn1a (113 aa).

The signal sequence occupies residues 1 to 21; sequence MNTVRVTFLLVFVLPVSLGQA. The propeptide occupies 22-74; the sequence is DKDENRMEMQEKTEQGKSYLDFAENLLLQKLEELEAKLLEEDSEESRNSRQKR. Basic and acidic residues predominate over residues 60-69; the sequence is LEEDSEESRN. A disordered region spans residues 60–83; it reads LEEDSEESRNSRQKRCIGEGVPCD. Intrachain disulfides connect Cys-75/Cys-90, Cys-82/Cys-95, and Cys-89/Cys-110.

The protein belongs to the neurotoxin 14 (magi-1) family. 01 (HNTX-16) subfamily. As to expression, expressed by the venom gland.

The protein resides in the secreted. Its function is as follows. Probable ion channel inhibitor. The chain is U11-theraphotoxin-Hhn1a from Cyriopagopus hainanus (Chinese bird spider).